A 409-amino-acid chain; its full sequence is Putative competence-damage inducible protein (409 aa).

Belongs to the CinA family.

This is Putative competence-damage inducible protein from Clostridium botulinum (strain Loch Maree / Type A3).